The sequence spans 285 residues: Pantothenate synthetase (285 aa).

30–37 contacts ATP; it reads MGYLHEGH. His-37 (proton donor) is an active-site residue. Position 61 (Gln-61) interacts with (R)-pantoate. Beta-alanine is bound at residue Gln-61. Position 148–151 (148–151) interacts with ATP; that stretch reads GKKD. Gln-154 is a (R)-pantoate binding site. ATP is bound by residues Val-177 and 185–188; that span reads LSSR.

This sequence belongs to the pantothenate synthetase family. Homodimer.

It is found in the cytoplasm. It catalyses the reaction (R)-pantoate + beta-alanine + ATP = (R)-pantothenate + AMP + diphosphate + H(+). Its pathway is cofactor biosynthesis; (R)-pantothenate biosynthesis; (R)-pantothenate from (R)-pantoate and beta-alanine: step 1/1. Catalyzes the condensation of pantoate with beta-alanine in an ATP-dependent reaction via a pantoyl-adenylate intermediate. The sequence is that of Pantothenate synthetase from Leptospira interrogans serogroup Icterohaemorrhagiae serovar Lai (strain 56601).